The primary structure comprises 285 residues: Probable endonuclease 4 (285 aa).

Zn(2+)-binding residues include His69, His109, Glu145, Asp179, His182, His216, Asp229, His231, and Glu261.

It belongs to the AP endonuclease 2 family. Requires Zn(2+) as cofactor.

The enzyme catalyses Endonucleolytic cleavage to 5'-phosphooligonucleotide end-products.. Its function is as follows. Endonuclease IV plays a role in DNA repair. It cleaves phosphodiester bonds at apurinic or apyrimidinic (AP) sites, generating a 3'-hydroxyl group and a 5'-terminal sugar phosphate. This is Probable endonuclease 4 from Salmonella newport (strain SL254).